Reading from the N-terminus, the 395-residue chain is Phosphopentomutase (395 aa).

Mn(2+) contacts are provided by D14, D286, H291, D327, H328, and H339.

Belongs to the phosphopentomutase family. Requires Mn(2+) as cofactor.

It is found in the cytoplasm. It carries out the reaction 2-deoxy-alpha-D-ribose 1-phosphate = 2-deoxy-D-ribose 5-phosphate. The catalysed reaction is alpha-D-ribose 1-phosphate = D-ribose 5-phosphate. It functions in the pathway carbohydrate degradation; 2-deoxy-D-ribose 1-phosphate degradation; D-glyceraldehyde 3-phosphate and acetaldehyde from 2-deoxy-alpha-D-ribose 1-phosphate: step 1/2. Isomerase that catalyzes the conversion of deoxy-ribose 1-phosphate (dRib-1-P) and ribose 1-phosphate (Rib-1-P) to deoxy-ribose 5-phosphate (dRib-5-P) and ribose 5-phosphate (Rib-5-P), respectively. This is Phosphopentomutase from Staphylococcus haemolyticus (strain JCSC1435).